Here is a 210-residue protein sequence, read N- to C-terminus: Ras-related protein Rab-8 (210 aa).

15-22 (GDSGVGKT) serves as a coordination point for GTP. The Effector region signature appears at 37 to 45 (FISTIGIDF). GTP contacts are provided by residues 63–67 (DTAGQ) and 121–124 (NKCD). Cysteine methyl ester is present on C207. Residue C207 is the site of S-geranylgeranyl cysteine attachment. The propeptide at 208–210 (SLL) is removed in mature form.

It belongs to the small GTPase superfamily. Rab family.

The protein resides in the cell membrane. The protein is Ras-related protein Rab-8 of Diplobatis ommata (Ocellated electric ray).